The sequence spans 361 residues: Phospho-N-acetylmuramoyl-pentapeptide-transferase (361 aa).

A run of 10 helical transmembrane segments spans residues 27–47 (GALF…ISLL), 72–92 (TPTM…LLWA), 99–119 (VWIT…DDYL), 139–159 (ALIA…GLAY), 169–189 (AIVN…VGAG), 200–220 (GLAI…AYLV), 240–260 (LAVV…FNAP), 264–284 (IFMG…VAVA), 289–309 (IVLA…IIQV), and 338–358 (QVVI…LATL).

Belongs to the glycosyltransferase 4 family. MraY subfamily. Requires Mg(2+) as cofactor.

It is found in the cell inner membrane. The enzyme catalyses UDP-N-acetyl-alpha-D-muramoyl-L-alanyl-gamma-D-glutamyl-meso-2,6-diaminopimeloyl-D-alanyl-D-alanine + di-trans,octa-cis-undecaprenyl phosphate = di-trans,octa-cis-undecaprenyl diphospho-N-acetyl-alpha-D-muramoyl-L-alanyl-D-glutamyl-meso-2,6-diaminopimeloyl-D-alanyl-D-alanine + UMP. Its pathway is cell wall biogenesis; peptidoglycan biosynthesis. Its function is as follows. Catalyzes the initial step of the lipid cycle reactions in the biosynthesis of the cell wall peptidoglycan: transfers peptidoglycan precursor phospho-MurNAc-pentapeptide from UDP-MurNAc-pentapeptide onto the lipid carrier undecaprenyl phosphate, yielding undecaprenyl-pyrophosphoryl-MurNAc-pentapeptide, known as lipid I. In Methylobacterium nodulans (strain LMG 21967 / CNCM I-2342 / ORS 2060), this protein is Phospho-N-acetylmuramoyl-pentapeptide-transferase.